The primary structure comprises 656 residues: Threonine--tRNA ligase (656 aa).

Residues 1–63 (MAEIQLTFPD…LEDGAIEIIT (63 aa)) form the TGS domain. Residues 243–541 (DHRVIGNQLD…LTEIYKGAFP (299 aa)) form a catalytic region. Zn(2+) contacts are provided by Cys-337, His-388, and His-518.

It belongs to the class-II aminoacyl-tRNA synthetase family. As to quaternary structure, homodimer. It depends on Zn(2+) as a cofactor.

The protein localises to the cytoplasm. The catalysed reaction is tRNA(Thr) + L-threonine + ATP = L-threonyl-tRNA(Thr) + AMP + diphosphate + H(+). In terms of biological role, catalyzes the attachment of threonine to tRNA(Thr) in a two-step reaction: L-threonine is first activated by ATP to form Thr-AMP and then transferred to the acceptor end of tRNA(Thr). Also edits incorrectly charged L-seryl-tRNA(Thr). The polypeptide is Threonine--tRNA ligase (Latilactobacillus sakei subsp. sakei (strain 23K) (Lactobacillus sakei subsp. sakei)).